Consider the following 202-residue polypeptide: Glycerol-3-phosphate acyltransferase (202 aa).

Transmembrane regions (helical) follow at residues 3–23 (ILLA…VVVS), 51–71 (KAAI…VWLV), 74–94 (FGIG…LGHL), 116–136 (AVHP…AFFF), and 140–160 (SLAA…LFGT).

This sequence belongs to the PlsY family. In terms of assembly, probably interacts with PlsX.

The protein localises to the cell inner membrane. It carries out the reaction an acyl phosphate + sn-glycerol 3-phosphate = a 1-acyl-sn-glycero-3-phosphate + phosphate. It participates in lipid metabolism; phospholipid metabolism. In terms of biological role, catalyzes the transfer of an acyl group from acyl-phosphate (acyl-PO(4)) to glycerol-3-phosphate (G3P) to form lysophosphatidic acid (LPA). This enzyme utilizes acyl-phosphate as fatty acyl donor, but not acyl-CoA or acyl-ACP. This Burkholderia thailandensis (strain ATCC 700388 / DSM 13276 / CCUG 48851 / CIP 106301 / E264) protein is Glycerol-3-phosphate acyltransferase.